A 290-amino-acid chain; its full sequence is Ribonuclease 3 (290 aa).

The RNase III domain maps to 20 to 145; that stretch reads YSCFYRILGF…FIGAIYLDRG (126 aa). Glu62 contacts Mg(2+). Asp66 is a catalytic residue. Residues Asn131 and Glu134 each contribute to the Mg(2+) site. Residue Glu134 is part of the active site. One can recognise a DRBM domain in the interval 173 to 242; that stretch reads NFKSKLIEWS…AQMTLKKIKG (70 aa). The segment at 254 to 290 is disordered; sequence KTQNNVPAEDTTPESEMSLTAENQQIDEIISTEEISV. Positions 267 to 279 are enriched in polar residues; it reads ESEMSLTAENQQI.

It belongs to the ribonuclease III family. Homodimer. Mg(2+) is required as a cofactor.

Its subcellular location is the cytoplasm. The catalysed reaction is Endonucleolytic cleavage to 5'-phosphomonoester.. Digests double-stranded RNA. Involved in the processing of primary rRNA transcript to yield the immediate precursors to the large and small rRNAs (23S and 16S). Processes some mRNAs, and tRNAs when they are encoded in the rRNA operon. Processes pre-crRNA and tracrRNA of type II CRISPR loci if present in the organism. This is Ribonuclease 3 from Bacteroides fragilis (strain YCH46).